Here is a 118-residue protein sequence, read N- to C-terminus: Large ribosomal subunit protein uL24 (118 aa).

It belongs to the universal ribosomal protein uL24 family. As to quaternary structure, part of the 50S ribosomal subunit.

One of two assembly initiator proteins, it binds directly to the 5'-end of the 23S rRNA, where it nucleates assembly of the 50S subunit. Its function is as follows. One of the proteins that surrounds the polypeptide exit tunnel on the outside of the subunit. This is Large ribosomal subunit protein uL24 from Prochlorococcus marinus (strain MIT 9301).